A 677-amino-acid polypeptide reads, in one-letter code: Methionine--tRNA ligase (677 aa).

A 'HIGH' region motif is present at residues 15–25 (PYANGSIHLGH). Residues C146, C149, C159, and C162 each coordinate Zn(2+). The short motif at 333–337 (KMSKS) is the 'KMSKS' region element. K336 contacts ATP. The tRNA-binding domain occupies 575 to 677 (DFAKIDLRVA…DGAKPGQQVK (103 aa)).

The protein belongs to the class-I aminoacyl-tRNA synthetase family. MetG type 1 subfamily. As to quaternary structure, homodimer. Zn(2+) serves as cofactor.

It localises to the cytoplasm. It catalyses the reaction tRNA(Met) + L-methionine + ATP = L-methionyl-tRNA(Met) + AMP + diphosphate. Its function is as follows. Is required not only for elongation of protein synthesis but also for the initiation of all mRNA translation through initiator tRNA(fMet) aminoacylation. This Salmonella choleraesuis (strain SC-B67) protein is Methionine--tRNA ligase.